We begin with the raw amino-acid sequence, 272 residues long: HMP-PP phosphatase (272 aa).

Aspartate 8 functions as the Nucleophile in the catalytic mechanism. Mg(2+)-binding residues include aspartate 8, aspartate 10, and aspartate 212.

Belongs to the HAD-like hydrolase superfamily. Cof family. Mg(2+) is required as a cofactor.

The enzyme catalyses 4-amino-2-methyl-5-(diphosphooxymethyl)pyrimidine + H2O = 4-amino-2-methyl-5-(phosphooxymethyl)pyrimidine + phosphate + H(+). Functionally, catalyzes the hydrolysis of 4-amino-2-methyl-5-hydroxymethylpyrimidine pyrophosphate (HMP-PP) to 4-amino-2-methyl-5-hydroxymethylpyrimidine phosphate (HMP-P). This chain is HMP-PP phosphatase, found in Escherichia coli O157:H7.